The primary structure comprises 258 residues: tRNA pseudouridine synthase A (258 aa).

Asp61 serves as the catalytic Nucleophile. Tyr119 provides a ligand contact to substrate.

Belongs to the tRNA pseudouridine synthase TruA family. Homodimer.

It carries out the reaction uridine(38/39/40) in tRNA = pseudouridine(38/39/40) in tRNA. Its function is as follows. Formation of pseudouridine at positions 38, 39 and 40 in the anticodon stem and loop of transfer RNAs. This chain is tRNA pseudouridine synthase A, found in Chlorobium phaeobacteroides (strain DSM 266 / SMG 266 / 2430).